The following is a 185-amino-acid chain: Ribosome-recycling factor (185 aa).

This sequence belongs to the RRF family.

It localises to the cytoplasm. Responsible for the release of ribosomes from messenger RNA at the termination of protein biosynthesis. May increase the efficiency of translation by recycling ribosomes from one round of translation to another. In Streptococcus pyogenes serotype M28 (strain MGAS6180), this protein is Ribosome-recycling factor.